We begin with the raw amino-acid sequence, 98 residues long: NADH-ubiquinone oxidoreductase chain 4L (98 aa).

Transmembrane regions (helical) follow at residues 1-21 (MTPVHFSFTSAFILGLMGLAF), 29-49 (ALLCLEGMMLSLFIALSLWAL), and 58-78 (VAPMLLLAFSACEASAGLALL).

This sequence belongs to the complex I subunit 4L family.

The protein resides in the mitochondrion membrane. The catalysed reaction is a ubiquinone + NADH + 5 H(+)(in) = a ubiquinol + NAD(+) + 4 H(+)(out). Its function is as follows. Core subunit of the mitochondrial membrane respiratory chain NADH dehydrogenase (Complex I) which catalyzes electron transfer from NADH through the respiratory chain, using ubiquinone as an electron acceptor. Part of the enzyme membrane arm which is embedded in the lipid bilayer and involved in proton translocation. This Salmo salar (Atlantic salmon) protein is NADH-ubiquinone oxidoreductase chain 4L (MT-ND4L).